Here is a 329-residue protein sequence, read N- to C-terminus: GTPase Obg (329 aa).

In terms of domain architecture, Obg spans 1–159; sequence MQFIDQARIT…WLLHLELKLL (159 aa). Positions 160–328 constitute an OBG-type G domain; that stretch reads AEVGIIGLPN…LLNKIWSKLE (169 aa). ATP is bound by residues 166-173, 191-195, 213-216, 280-283, and 309-311; these read GLPNAGKS, FTTLI, DIPG, NKKE, and SAI. Mg(2+)-binding residues include S173 and T193.

The protein belongs to the TRAFAC class OBG-HflX-like GTPase superfamily. OBG GTPase family. In terms of assembly, monomer. It depends on Mg(2+) as a cofactor.

It is found in the cytoplasm. Its function is as follows. An essential GTPase which binds GTP, GDP and possibly (p)ppGpp with moderate affinity, with high nucleotide exchange rates and a fairly low GTP hydrolysis rate. Plays a role in control of the cell cycle, stress response, ribosome biogenesis and in those bacteria that undergo differentiation, in morphogenesis control. The sequence is that of GTPase Obg from Prochlorococcus marinus (strain SARG / CCMP1375 / SS120).